Reading from the N-terminus, the 433-residue chain is Tol-Pal system protein TolB (433 aa).

The first 21 residues, 1–21 (MINLFRGLLVVLCFASAMVSA), serve as a signal peptide directing secretion.

The protein belongs to the TolB family. As to quaternary structure, the Tol-Pal system is composed of five core proteins: the inner membrane proteins TolA, TolQ and TolR, the periplasmic protein TolB and the outer membrane protein Pal. They form a network linking the inner and outer membranes and the peptidoglycan layer.

The protein localises to the periplasm. Part of the Tol-Pal system, which plays a role in outer membrane invagination during cell division and is important for maintaining outer membrane integrity. The polypeptide is Tol-Pal system protein TolB (Pseudomonas syringae pv. syringae (strain B728a)).